The primary structure comprises 2410 residues: Coprinoferrin synthetase (2410 aa).

The adenylation 1 stretch occupies residues 237–646 (LERRAKTNPH…GRIDTQIKVR (410 aa)). Residues 783-860 (RDCTPLEAEV…DIAQLVHVST (78 aa)) enclose the Carrier 1 domain. At Ser-820 the chain carries O-(pantetheine 4'-phosphoryl)serine. The condensation 1 stretch occupies residues 891–1260 (DILPPFPVQE…SVEAVVNVHD (370 aa)). Residues 1298–1317 (ELPLPSRRSPEPVRKVNDDE) form a disordered region. The segment covering 1305–1314 (RSPEPVRKVN) has biased composition (basic and acidic residues). Positions 1324-1400 (LLDPVVVADL…RLARVVSNNK (77 aa)) constitute a Carrier 2 domain. Ser-1361 carries the O-(pantetheine 4'-phosphoryl)serine modification. The segment at 1436–1839 (IIPSTALQSG…RIGRTFSVPS (404 aa)) is condensation 2. Residues 1858 to 1932 (VQAGIIHPVL…DLVLQATEIK (75 aa)) enclose the Carrier 3 domain. Ser-1893 bears the O-(pantetheine 4'-phosphoryl)serine mark. The tract at residues 1992-2315 (FQYLFTFKLP…TPIFNVNVNV (324 aa)) is condensation 3.

The protein belongs to the NRP synthetase family.

It functions in the pathway siderophore biosynthesis. In terms of biological role, nonribosomal peptide synthase; part of the gene cluster that mediates the biosynthesis of coprinoferrin, an acylated tripeptide hydroxamate siderophore. The biosynthesis of coprinoferrin depends on the hydroxylation of ornithine to N(5)-hydroxyornithine, catalyzed by the monooxygenase cpf2. The second step, the acylation of N(5)-hydroxy-L-ornithine to yield N(5)-hexanoyl-N(5)-hydroxyl-L-ornithine is catalyzed by a not yet identified acyltransferase. Finally, assembly of coprinoferrin is catalyzed by the nonribosomal peptide synthase (NRPS) cpf1 via amide bond formation between three N(5)-hexanoyl-N(5)-hydroxyl-L-ornithine molecules to release the linear trimer. Interestingly, proteins seemingly not directly related to biosynthesis, such as transcription factors, replication factors, and autophagy-related proteins, are conserved among the clusters homologous to the coprinoferrin cluster, suggesting that the cluster may also play developmental and cell biological functions. The polypeptide is Coprinoferrin synthetase (Coprinopsis cinerea (strain Okayama-7 / 130 / ATCC MYA-4618 / FGSC 9003) (Inky cap fungus)).